The following is a 473-amino-acid chain: N-lysine methyltransferase SETD6 (473 aa).

The interval 1-23 is disordered; it reads MAAPAKRARVSGGSPLVAPCPSP. Serine 14 and serine 22 each carry phosphoserine. The SET domain maps to 62-286; it reads PKVTVSRQGT…EGHEIFNTYG (225 aa). Lysine 63 bears the N6-methylated lysine; by autocatalysis mark. 73–75 contacts S-adenosyl-L-methionine; it reads AGY. Tryptophan 122 serves as a coordination point for substrate. N6-methylated lysine; by autocatalysis is present on lysine 179. Tyrosine 223 is an S-adenosyl-L-methionine binding site. Substrate is bound by residues serine 224 and glutamine 226. Residues 251–252 and tyrosine 297 contribute to the S-adenosyl-L-methionine site; that span reads NH. An N6-methylated lysine; by autocatalysis modification is found at lysine 372.

The protein belongs to the class V-like SAM-binding methyltransferase superfamily. Histone-lysine methyltransferase family. SETD6 subfamily. In terms of assembly, monomer, homodimer and homotrimer; these structures are stabilized in the presence of S-adenosyl-L-methionine (SAM). Automethylated.

The protein resides in the nucleus. It catalyses the reaction L-lysyl-[protein] + S-adenosyl-L-methionine = N(6)-methyl-L-lysyl-[protein] + S-adenosyl-L-homocysteine + H(+). The catalysed reaction is L-lysyl(8)-[histone H2AZ] + S-adenosyl-L-methionine = N(6)-methyl-L-lysyl(8)-[histone H2AZ] + S-adenosyl-L-homocysteine + H(+). Functionally, protein-lysine N-methyltransferase. Monomethylates 'Lys-310' of the RELA subunit of NF-kappa-B complex, leading to down-regulation of NF-kappa-B transcription factor activity. Monomethylates 'Lys-8' of H2AZ (H2AZK8me1). Required for the maintenance of embryonic stem cell self-renewal. Methylates PAK4. This chain is N-lysine methyltransferase SETD6 (Setd6), found in Mus musculus (Mouse).